A 195-amino-acid chain; its full sequence is Large ribosomal subunit protein eL6 (195 aa).

Ser-105 and Ser-115 each carry phosphoserine.

It belongs to the eukaryotic ribosomal protein eL6 family. In terms of assembly, component of the large ribosomal subunit (LSU). Mature yeast ribosomes consist of a small (40S) and a large (60S) subunit. The 40S small subunit contains 1 molecule of ribosomal RNA (18S rRNA) and at least 33 different proteins. The large 60S subunit contains 3 rRNA molecules (25S, 5.8S and 5S rRNA) and at least 46 different proteins.

The protein localises to the cytoplasm. It localises to the nucleus. The protein resides in the nucleolus. In terms of biological role, component of the ribosome, a large ribonucleoprotein complex responsible for the synthesis of proteins in the cell. The small ribosomal subunit (SSU) binds messenger RNAs (mRNAs) and translates the encoded message by selecting cognate aminoacyl-transfer RNA (tRNA) molecules. The large subunit (LSU) contains the ribosomal catalytic site termed the peptidyl transferase center (PTC), which catalyzes the formation of peptide bonds, thereby polymerizing the amino acids delivered by tRNAs into a polypeptide chain. The nascent polypeptides leave the ribosome through a tunnel in the LSU and interact with protein factors that function in enzymatic processing, targeting, and the membrane insertion of nascent chains at the exit of the ribosomal tunnel. This is Large ribosomal subunit protein eL6 (rpl6) from Schizosaccharomyces pombe (strain 972 / ATCC 24843) (Fission yeast).